The primary structure comprises 213 residues: Orotate phosphoribosyltransferase (213 aa).

Lys-26 is a binding site for 5-phospho-alpha-D-ribose 1-diphosphate. Position 34–35 (34–35 (FF)) interacts with orotate. 5-phospho-alpha-D-ribose 1-diphosphate is bound by residues 72–73 (YK), Arg-98, Lys-99, Lys-102, and 123–131 (DDVISAGTS). Orotate is bound by residues Ser-127 and Arg-155.

This sequence belongs to the purine/pyrimidine phosphoribosyltransferase family. PyrE subfamily. In terms of assembly, homodimer. Mg(2+) is required as a cofactor.

It carries out the reaction orotidine 5'-phosphate + diphosphate = orotate + 5-phospho-alpha-D-ribose 1-diphosphate. Its pathway is pyrimidine metabolism; UMP biosynthesis via de novo pathway; UMP from orotate: step 1/2. In terms of biological role, catalyzes the transfer of a ribosyl phosphate group from 5-phosphoribose 1-diphosphate to orotate, leading to the formation of orotidine monophosphate (OMP). The polypeptide is Orotate phosphoribosyltransferase (Neisseria gonorrhoeae (strain NCCP11945)).